The sequence spans 272 residues: Acyl-[acyl-carrier-protein]--UDP-N-acetylglucosamine O-acyltransferase (272 aa).

The protein belongs to the transferase hexapeptide repeat family. LpxA subfamily. In terms of assembly, homotrimer.

Its subcellular location is the cytoplasm. The catalysed reaction is a (3R)-hydroxyacyl-[ACP] + UDP-N-acetyl-alpha-D-glucosamine = a UDP-3-O-[(3R)-3-hydroxyacyl]-N-acetyl-alpha-D-glucosamine + holo-[ACP]. It functions in the pathway glycolipid biosynthesis; lipid IV(A) biosynthesis; lipid IV(A) from (3R)-3-hydroxytetradecanoyl-[acyl-carrier-protein] and UDP-N-acetyl-alpha-D-glucosamine: step 1/6. Involved in the biosynthesis of lipid A, a phosphorylated glycolipid that anchors the lipopolysaccharide to the outer membrane of the cell. This chain is Acyl-[acyl-carrier-protein]--UDP-N-acetylglucosamine O-acyltransferase, found in Rhizobium johnstonii (strain DSM 114642 / LMG 32736 / 3841) (Rhizobium leguminosarum bv. viciae).